The following is a 337-amino-acid chain: Ketol-acid reductoisomerase (NADP(+)) (337 aa).

Residues 3 to 183 form the KARI N-terminal Rossmann domain; it reads VEMFYDDDAD…GGTRAGVIKT (181 aa). Residues 26–29, Ser-52, Ser-54, and 84–87 contribute to the NADP(+) site; these read YGSQ and DTAQ. His-109 is a catalytic residue. Residue Gly-135 coordinates NADP(+). One can recognise a KARI C-terminal knotted domain in the interval 184–329; sequence TFKEETETDL…AKLRGLMSWV (146 aa). Mg(2+)-binding residues include Asp-192, Glu-196, Glu-228, and Glu-232. Ser-253 is a binding site for substrate.

Belongs to the ketol-acid reductoisomerase family. Mg(2+) is required as a cofactor.

The catalysed reaction is (2R)-2,3-dihydroxy-3-methylbutanoate + NADP(+) = (2S)-2-acetolactate + NADPH + H(+). It catalyses the reaction (2R,3R)-2,3-dihydroxy-3-methylpentanoate + NADP(+) = (S)-2-ethyl-2-hydroxy-3-oxobutanoate + NADPH + H(+). The protein operates within amino-acid biosynthesis; L-isoleucine biosynthesis; L-isoleucine from 2-oxobutanoate: step 2/4. It functions in the pathway amino-acid biosynthesis; L-valine biosynthesis; L-valine from pyruvate: step 2/4. In terms of biological role, involved in the biosynthesis of branched-chain amino acids (BCAA). Catalyzes an alkyl-migration followed by a ketol-acid reduction of (S)-2-acetolactate (S2AL) to yield (R)-2,3-dihydroxy-isovalerate. In the isomerase reaction, S2AL is rearranged via a Mg-dependent methyl migration to produce 3-hydroxy-3-methyl-2-ketobutyrate (HMKB). In the reductase reaction, this 2-ketoacid undergoes a metal-dependent reduction by NADPH to yield (R)-2,3-dihydroxy-isovalerate. The protein is Ketol-acid reductoisomerase (NADP(+)) of Nocardia farcinica (strain IFM 10152).